A 175-amino-acid polypeptide reads, in one-letter code: Protein-export protein SecB (175 aa).

Residues 153-163 (QQQPDAANGND) are compositionally biased toward polar residues. Residues 153 to 175 (QQQPDAANGNDSGIILPPGATRQ) are disordered.

The protein belongs to the SecB family. As to quaternary structure, homotetramer, a dimer of dimers. One homotetramer interacts with 1 SecA dimer.

It localises to the cytoplasm. Functionally, one of the proteins required for the normal export of preproteins out of the cell cytoplasm. It is a molecular chaperone that binds to a subset of precursor proteins, maintaining them in a translocation-competent state. It also specifically binds to its receptor SecA. The sequence is that of Protein-export protein SecB from Bordetella bronchiseptica (strain ATCC BAA-588 / NCTC 13252 / RB50) (Alcaligenes bronchisepticus).